A 353-amino-acid chain; its full sequence is DNA integrity scanning protein DisA (353 aa).

Residues 6–144 (DKELMNILKI…GGIKYVLRDS (139 aa)) enclose the DAC domain. ATP contacts are provided by residues Gly-73, Leu-91, and 104–108 (TRHRT).

The protein belongs to the DisA family. As to quaternary structure, homooctamer. Requires Mg(2+) as cofactor.

The catalysed reaction is 2 ATP = 3',3'-c-di-AMP + 2 diphosphate. Functionally, participates in a DNA-damage check-point that is active prior to asymmetric division when DNA is damaged. DisA forms globular foci that rapidly scan along the chromosomes during sporulation, searching for lesions. When a lesion is present, DisA pauses at the lesion site. This triggers a cellular response that culminates in a temporary block in sporulation initiation. In terms of biological role, also has diadenylate cyclase activity, catalyzing the condensation of 2 ATP molecules into cyclic di-AMP (c-di-AMP). c-di-AMP acts as a signaling molecule that couples DNA integrity with progression of sporulation. The rise in c-di-AMP level generated by DisA while scanning the chromosome, operates as a positive signal that advances sporulation; upon encountering a lesion, the DisA focus arrests at the damaged site and halts c-di-AMP synthesis. The polypeptide is DNA integrity scanning protein DisA (Clostridium botulinum (strain 657 / Type Ba4)).